The chain runs to 453 residues: DNA repair protein RadA (453 aa).

The C4-type zinc finger occupies 10–27; that stretch reads CQECGYQSPKYLGRCPNC. 95–102 is an ATP binding site; that stretch reads GDPGIGKS. The short motif at 251 to 255 is the RadA KNRFG motif element; the sequence is KNRFG. The lon-protease-like stretch occupies residues 350–453; that stretch reads DAYLKSAGGV…VGQVLNAVFS (104 aa).

The protein belongs to the RecA family. RadA subfamily.

DNA-dependent ATPase involved in processing of recombination intermediates, plays a role in repairing DNA breaks. Stimulates the branch migration of RecA-mediated strand transfer reactions, allowing the 3' invading strand to extend heteroduplex DNA faster. Binds ssDNA in the presence of ADP but not other nucleotides, has ATPase activity that is stimulated by ssDNA and various branched DNA structures, but inhibited by SSB. Does not have RecA's homology-searching function. This Streptococcus pyogenes serotype M1 protein is DNA repair protein RadA.